Consider the following 744-residue polypeptide: MAADKPADQGAEKHEGTGQSSGITDQEKELSTNAFQAFTSGNYDACLQHLACLQDINKDDYKIILNTAVAEFFKSNQTTTDNLRQTLNQLKNQVHSAVEEMDGLDDVENSMLYYNQAVILYHLRQYTEAISVGEKLYQFIEPFEEKFAQAVCFLLVDLYILTYQAEKALHLLAVLEKMISQGNNNKNGKNETGNNNNKDGSNHKAESGALIEAAKSKIHQYIVRAYIQMKSLKACKREIKSVMNTAGNSAPSLFLKSNFEYLRGNYRKAVKLLNSSNIAEHPGFMKTGECLRCMFWNNLGCIHFAMSKHNLGIFYFKKALQENDNVCAQLSAGSTDPGKKFSGRPMCTLLTNKRYELLYNCGIQLLHIGRPLAAFECLIEAVQVYHANPRLWLRLAECCIAANKGTSEQETKGLPSKKGIVQSIVGQGYHRKIVLASQSIQNTVYNDGQSSAIPVASMEFAAICLRNALLLLPEEQQDPKQENGAKNSNQLGGNTESSESSETCSSKSHDGDKFIPAPPSSPLRKQELENLKCSILACSAYVALALGDNLMALNHADKLLQQPKLSGSLKFLGHLYAAEALISLDRISDAITHLNPENVTDVSLGISSNEQDQGSDKGENEAMESSGKRAPQCYPSSVNSARTVMLFNLGSAYCLRSEYDKARKCLHQAASMIHPKEVPPEAILLAVYLELQNGNTQLALQIIKRNQLLPAVKTHSEVRKKPVFQPVHPIQPIQMPAFTTVQRK.

A compositionally biased stretch (basic and acidic residues) spans 1-16 (MAADKPADQGAEKHEG). Residues 1 to 25 (MAADKPADQGAEKHEGTGQSSGITD) form a disordered region. At Ala-2 the chain carries N-acetylalanine. A coiled-coil region spans residues 74 to 107 (KSNQTTTDNLRQTLNQLKNQVHSAVEEMDGLDDV). Residues 183–199 (NNNKNGKNETGNNNNKD) show a composition bias toward low complexity. Disordered stretches follow at residues 183 to 204 (NNNKNGKNETGNNNNKDGSNHK), 477 to 521 (QDPK…PPSS), and 602 to 634 (VSLGISSNEQDQGSDKGENEAMESSGKRAPQCY). Positions 484 to 495 (GAKNSNQLGGNT) are enriched in polar residues. Residues 496–506 (ESSESSETCSS) are compositionally biased toward low complexity. Over residues 602 to 612 (VSLGISSNEQD) the composition is skewed to polar residues.

It belongs to the CNOT10 family. In terms of assembly, component of the CCR4-NOT complex; distinct complexes seem to exist that differ in the participation of probably mutually exclusive catalytic subunits. CNOT10 and CNOT11 form a subcomplex docked to the CNOT1 scaffold.

It is found in the cytoplasm. The protein resides in the nucleus. In terms of biological role, component of the CCR4-NOT complex which is one of the major cellular mRNA deadenylases and is linked to various cellular processes including bulk mRNA degradation, miRNA-mediated repression, translational repression during translational initiation and general transcription regulation. Additional complex functions may be a consequence of its influence on mRNA expression. Is not required for association of CNOT7 to the CCR4-NOT complex. This Macaca fascicularis (Crab-eating macaque) protein is CCR4-NOT transcription complex subunit 10 (CNOT10).